A 263-amino-acid polypeptide reads, in one-letter code: Mediator of RNA polymerase II transcription subunit 4 (263 aa).

Positions 62–106 form a coiled coil; it reads QLAAEQAGIEKKMDGLREQVKEQDEEINQLQKQLKEAEHILATSI. Positions 221–263 are disordered; that stretch reads LHMTMGAGAGSVSLDTRSHKDASQDDVEVMSTDSSSSSSSDSQ. Low complexity predominate over residues 251–263; it reads STDSSSSSSSDSQ.

Belongs to the Mediator complex subunit 4 family. In terms of assembly, component of the Mediator complex.

Its subcellular location is the nucleus. Its function is as follows. Component of the Mediator complex, a coactivator involved in the regulated transcription of nearly all RNA polymerase II-dependent genes. Mediator functions as a bridge to convey information from gene-specific regulatory proteins to the basal RNA polymerase II transcription machinery. Mediator is recruited to promoters by direct interactions with regulatory proteins and serves as a scaffold for the assembly of a functional preinitiation complex with RNA polymerase II and the general transcription factors. The polypeptide is Mediator of RNA polymerase II transcription subunit 4 (MED4) (Aedes aegypti (Yellowfever mosquito)).